Consider the following 357-residue polypeptide: UDP-N-acetylglucosamine--N-acetylmuramyl-(pentapeptide) pyrophosphoryl-undecaprenol N-acetylglucosamine transferase (357 aa).

UDP-N-acetyl-alpha-D-glucosamine-binding positions include 14-16 (TAG), Arg-168, Ser-198, and Gln-292.

The protein belongs to the glycosyltransferase 28 family. MurG subfamily.

It localises to the cell membrane. The enzyme catalyses di-trans,octa-cis-undecaprenyl diphospho-N-acetyl-alpha-D-muramoyl-L-alanyl-D-glutamyl-meso-2,6-diaminopimeloyl-D-alanyl-D-alanine + UDP-N-acetyl-alpha-D-glucosamine = di-trans,octa-cis-undecaprenyl diphospho-[N-acetyl-alpha-D-glucosaminyl-(1-&gt;4)]-N-acetyl-alpha-D-muramoyl-L-alanyl-D-glutamyl-meso-2,6-diaminopimeloyl-D-alanyl-D-alanine + UDP + H(+). It participates in cell wall biogenesis; peptidoglycan biosynthesis. Functionally, cell wall formation. Catalyzes the transfer of a GlcNAc subunit on undecaprenyl-pyrophosphoryl-MurNAc-pentapeptide (lipid intermediate I) to form undecaprenyl-pyrophosphoryl-MurNAc-(pentapeptide)GlcNAc (lipid intermediate II). The sequence is that of UDP-N-acetylglucosamine--N-acetylmuramyl-(pentapeptide) pyrophosphoryl-undecaprenol N-acetylglucosamine transferase from Oceanobacillus iheyensis (strain DSM 14371 / CIP 107618 / JCM 11309 / KCTC 3954 / HTE831).